A 347-amino-acid chain; its full sequence is Leucine-rich repeat-containing protein 69 (347 aa).

LRR repeat units lie at residues 15–37 (NTKI…EKLP), 38–60 (NLKT…RTLT), 61–82 (QLTL…IKYL), 84–105 (SLKN…VFNG), 108–129 (RLIM…IGRL), 131–152 (SLTY…LCSL), 154–175 (HLSE…IKFL), 177–198 (NLQQ…ICHL), and 200–222 (KLRV…QNLR).

Belongs to the LRRC69 family.

In Mus musculus (Mouse), this protein is Leucine-rich repeat-containing protein 69 (Lrrc69).